Consider the following 295-residue polypeptide: Formamidopyrimidine-DNA glycosylase (295 aa).

The active-site Schiff-base intermediate with DNA is the proline 2. Glutamate 3 serves as the catalytic Proton donor. Residue lysine 61 is the Proton donor; for beta-elimination activity of the active site. DNA-binding residues include histidine 95, arginine 117, and arginine 159. The segment at histidine 245 to proline 279 adopts an FPG-type zinc-finger fold. The active-site Proton donor; for delta-elimination activity is arginine 269.

Belongs to the FPG family. In terms of assembly, monomer. Requires Zn(2+) as cofactor.

It carries out the reaction Hydrolysis of DNA containing ring-opened 7-methylguanine residues, releasing 2,6-diamino-4-hydroxy-5-(N-methyl)formamidopyrimidine.. The catalysed reaction is 2'-deoxyribonucleotide-(2'-deoxyribose 5'-phosphate)-2'-deoxyribonucleotide-DNA = a 3'-end 2'-deoxyribonucleotide-(2,3-dehydro-2,3-deoxyribose 5'-phosphate)-DNA + a 5'-end 5'-phospho-2'-deoxyribonucleoside-DNA + H(+). Involved in base excision repair of DNA damaged by oxidation or by mutagenic agents. Acts as a DNA glycosylase that recognizes and removes damaged bases. Has a preference for oxidized purines, such as 7,8-dihydro-8-oxoguanine (8-oxoG). Has AP (apurinic/apyrimidinic) lyase activity and introduces nicks in the DNA strand. Cleaves the DNA backbone by beta-delta elimination to generate a single-strand break at the site of the removed base with both 3'- and 5'-phosphates. The polypeptide is Formamidopyrimidine-DNA glycosylase (Nocardioides sp. (strain ATCC BAA-499 / JS614)).